The sequence spans 449 residues: Baeyer-Villiger oxidase GME11358 (449 aa).

Belongs to the questin oxidase family.

It functions in the pathway secondary metabolite biosynthesis. Baeyer-Villiger oxidase; part of the gene cluster that mediates the biosynthesis of dibenzodioxocinones such as pestalotiollide B, a novel class of inhibitors against cholesterol ester transfer protein (CEPT). The biosynthesis initiates from condensation of acetate and malonate units catalyzed by the non-reducing PKS pks8/GME11356. Pks8/GME11356 lacks a thioesterase (TE) domain, which is important to the cyclizing of the third ring of atrochrysone carboxylic acid, and the esterase GME11355 might play the role of TE and catalyzes the cyclization reaction of the C ring. The lactamase-like protein GME11357 (or other beta-lactamases in Pestalotiopsis microspora) probably hydrolyzes the thioester bond between the ACP of pks8/GME11356 and the intermediate to release atrochrysone carboxylic acid, which is spontaneously dehydrates to form endocrocin anthrone. Endocrocin anthrone is further converted to emodin via the endocrocin intermediate. Emodin is then oxidized by several enzymes such as the Baeyer-Villiger oxidase GME11358, the oxidoreductase GME11367, the short chain dehydrogenase/reductase GME11373, as well as by other oxidoreductases from the cluster, to modify the A and C rings and open the B ring, and finally yield monodictyphenone. The prenyltransferase GME11375 may catalyze the addition reaction between the C5 side chains and the carbon bone of dibenzodioxocinones. The remaining biochemical reactions to the final product dibenzodioxocinones should be methylation catalyzed by methyltransferase GME11366 and reduction and lactonization reaction catalyzed by a series of oxidordeuctases. The chain is Baeyer-Villiger oxidase GME11358 from Pestalotiopsis microspora.